Reading from the N-terminus, the 138-residue chain is RuBisCO chaperone RbcX (138 aa).

Positions 118–138 (VDNFPSETSNGESNNNDSPPS) are disordered. The span at 122-138 (PSETSNGESNNNDSPPS) shows a compositional bias: polar residues.

The protein belongs to the RbcX family. As to quaternary structure, homodimer. Interacts with the exposed C-terminal peptide of RbcL via its central cleft, contacts a second RbcL monomer via its peripheral polar surface.

The protein resides in the carboxysome. It is found in the cytoplasm. Its function is as follows. An RbcL-specific chaperone. The central cleft of the RbcX homodimer (RbcX2) binds the C-terminus of an RbcL monomer, stabilizing the C-terminus and probably preventing its reassociation with chaperonin GroEL-ES. At the same time the peripheral region of RbcX2 binds a second RbcL monomer, bridging the RbcL homodimers in the correct orientation. The RbcX2(2)-bound RbcL dimers then assemble into the RbcL8 core (RbcL8-(RbcX2)8). RbcS binding triggers the release of RbcX2. The sequence is that of RuBisCO chaperone RbcX from Synechocystis sp. (strain ATCC 27184 / PCC 6803 / Kazusa).